Here is a 1265-residue protein sequence, read N- to C-terminus: 5-oxoprolinase (1265 aa).

It belongs to the oxoprolinase family. Homodimer.

It localises to the cytoplasm. The protein localises to the cytosol. It carries out the reaction 5-oxo-L-proline + ATP + 2 H2O = L-glutamate + ADP + phosphate + H(+). Catalyzes the cleavage of 5-oxo-L-proline to form L-glutamate coupled to the hydrolysis of ATP to ADP and inorganic phosphate. The sequence is that of 5-oxoprolinase (oplah) from Dictyostelium discoideum (Social amoeba).